Reading from the N-terminus, the 87-residue chain is Large ribosomal subunit protein uL23c (87 aa).

Belongs to the universal ribosomal protein uL23 family. In terms of assembly, part of the 50S ribosomal subunit.

The protein resides in the plastid. It is found in the chloroplast. Its function is as follows. Binds to 23S rRNA. This Ostreococcus tauri protein is Large ribosomal subunit protein uL23c (rpl23).